The sequence spans 691 residues: Probable serine/threonine-protein kinase pXi (691 aa).

The 246-residue stretch at 18–263 (YEIGSQIGNG…IDQTLKHPWI (246 aa)) folds into the Protein kinase domain. Residues 24-32 (IGNGKFAQV) and Lys47 each bind ATP. Asp137 (proton acceptor) is an active-site residue. Disordered stretches follow at residues 314 to 350 (TPIK…ENEN), 420 to 447 (ENDS…KFTS), 510 to 536 (QHNN…GNGT), and 600 to 620 (GGSG…KKDK). The span at 322–336 (NNNNNNNNNNNNNNN) shows a compositional bias: low complexity. Over residues 338–350 (ILDKKSNENENEN) the composition is skewed to basic and acidic residues. Composition is skewed to low complexity over residues 423 to 433 (SSSSETYSSSS), 512 to 536 (NNNI…GNGT), and 600 to 615 (GGSG…TGGS). The stretch at 642 to 691 (PKETMDKLASVLSNYKQKNQEKSLKVKYEKQKDKYKKLKSQLKKDKSLLK) forms a coiled coil.

Belongs to the protein kinase superfamily. CAMK Ser/Thr protein kinase family.

The catalysed reaction is L-seryl-[protein] + ATP = O-phospho-L-seryl-[protein] + ADP + H(+). It carries out the reaction L-threonyl-[protein] + ATP = O-phospho-L-threonyl-[protein] + ADP + H(+). This chain is Probable serine/threonine-protein kinase pXi (pXi), found in Dictyostelium discoideum (Social amoeba).